A 193-amino-acid polypeptide reads, in one-letter code: Adenylate kinase (193 aa).

11-16 is a binding site for ATP; sequence GAGKGT. Residues 31 to 60 are NMP; the sequence is STGDLLRAEVKAQTPLGCQAKVYMDAGELV. Residues Thr32, Arg37, 58–60, 85–88, and Gln92 each bind AMP; these read ELV and GFPR. The LID stretch occupies residues 126–136; the sequence is ARGKEQGRSDD. Arg127 contacts ATP. AMP-binding residues include Arg133 and Arg145. Gln173 contacts ATP.

The protein belongs to the adenylate kinase family. In terms of assembly, monomer.

It is found in the cytoplasm. It carries out the reaction AMP + ATP = 2 ADP. It functions in the pathway purine metabolism; AMP biosynthesis via salvage pathway; AMP from ADP: step 1/1. Catalyzes the reversible transfer of the terminal phosphate group between ATP and AMP. Plays an important role in cellular energy homeostasis and in adenine nucleotide metabolism. This chain is Adenylate kinase, found in Synechococcus sp. (strain JA-2-3B'a(2-13)) (Cyanobacteria bacterium Yellowstone B-Prime).